We begin with the raw amino-acid sequence, 504 residues long: Cytochrome P450 4A24 (504 aa).

2 helical membrane passes run 6–26 and 112–132; these read LASA…LLLL and VVYR…NGQT. Cys451 is a binding site for heme.

The protein belongs to the cytochrome P450 family. Requires heme as cofactor.

The protein resides in the endoplasmic reticulum membrane. It catalyses the reaction an omega-methyl-long-chain fatty acid + reduced [NADPH--hemoprotein reductase] + O2 = an omega-hydroxy-long-chain fatty acid + oxidized [NADPH--hemoprotein reductase] + H2O + H(+). In terms of biological role, catalyzes the omega- and (omega-1)-hydroxylation of various fatty acids such as laurate and palmitate. Has no activity toward taurochenodeoxycholic acid. This is Cytochrome P450 4A24 (CYP4A24) from Sus scrofa (Pig).